The primary structure comprises 321 residues: Olfactory receptor 51V1 (321 aa).

Over 1–34 the chain is Extracellular; sequence MFLSSRMITSVSPSTSTNSSFLLTGFSGMEQQYP. Asn-18 is a glycosylation site (N-linked (GlcNAc...) asparagine). A helical membrane pass occupies residues 35 to 55; it reads WLSIPFSSIYAMVLLGNCMVL. Residues 56 to 63 lie on the Cytoplasmic side of the membrane; sequence HVIWTEPS. Residues 64–84 form a helical membrane-spanning segment; that stretch reads LHQPMFYFLSMLALTDLCMGL. Topologically, residues 85–108 are extracellular; it reads STVYTVLGILWGIIREISLDSCIA. Cys-106 and Cys-188 are disulfide-bonded. The helical transmembrane segment at 109-129 threads the bilayer; sequence QSYFIHGLSFMESSVLLTMAF. The Cytoplasmic portion of the chain corresponds to 130-148; that stretch reads DRYIAICNPLRYSSILTNS. The helical transmembrane segment at 149–169 threads the bilayer; it reads RIIKIGLTIIGRSFFFITPPI. Over 170-205 the chain is Extracellular; the sequence is ICLKFFNYCHFHILSHSFCLHQDLLRLACSDIRFNS. Residues 206 to 226 traverse the membrane as a helical segment; that stretch reads YYALMLVICILLLDAILILFS. The Cytoplasmic portion of the chain corresponds to 227-246; sequence YILILKSVLAVASQEERHKL. A helical transmembrane segment spans residues 247–267; it reads FQTCISHICAVLVFYIPIISL. Residues 268–282 are Extracellular-facing; that stretch reads TMVHRFGKHLSPVAH. Residues 283–303 traverse the membrane as a helical segment; sequence VLIGNIYILFPPLMNPIIYSV. Topologically, residues 304 to 321 are cytoplasmic; that stretch reads KTQQIHTRMLRLFSLKRY.

Belongs to the G-protein coupled receptor 1 family.

It is found in the cell membrane. Odorant receptor. This Homo sapiens (Human) protein is Olfactory receptor 51V1 (OR51V1).